We begin with the raw amino-acid sequence, 507 residues long: Cytochrome P450 7B1 (507 aa).

3 helical membrane-spanning segments follow: residues 14 to 34, 178 to 198, and 287 to 307; these read PLAL…LFLL, IFAF…YGKI, and FLWA…YYIL. C447 serves as a coordination point for heme.

The protein belongs to the cytochrome P450 family. Heme is required as a cofactor. Highly expressed in brain structures including the corpus callosum, the anterior commissure and fornix. The hippocampal expression is particularly prominent in the dentate gyrus. Expressed in liver and kidney. The hepatic expression is sexually dimorphic, predominantly detected in male liver while barely detectable in females. Expressed in lymph nodes and spleens, in both lymphoid and stromal compartments. Higher expression is detected in fibroblastic reticular cells, a type of stromal cells in the lymph nodes. Also expressed at high levels in the outer follicle and at the B cell-T cell boundary of splenic germinal centers. Expressed in dendritic cells (DCs) subpopulations being most abundant in CD8-positive DCs.

It is found in the endoplasmic reticulum membrane. The protein localises to the microsome membrane. The enzyme catalyses 25-hydroxycholesterol + reduced [NADPH--hemoprotein reductase] + O2 = 7alpha,25-dihydroxycholesterol + oxidized [NADPH--hemoprotein reductase] + H2O + H(+). It catalyses the reaction (25R)-cholest-5-ene-3beta,26-diol + reduced [NADPH--hemoprotein reductase] + O2 = (25R)-cholest-5-en-3beta,7alpha,26-triol + oxidized [NADPH--hemoprotein reductase] + H2O + H(+). It carries out the reaction (24S)-hydroxycholesterol + reduced [NADPH--hemoprotein reductase] + O2 = (24S)-7alpha-dihydroxycholesterol + oxidized [NADPH--hemoprotein reductase] + H2O + H(+). The catalysed reaction is (24S)-25-epoxycholesterol + reduced [NADPH--hemoprotein reductase] + O2 = (24S,25)-epoxy-7alpha-hydroxycholesterol + oxidized [NADPH--hemoprotein reductase] + H2O + H(+). The enzyme catalyses (22R)-hydroxycholesterol + reduced [NADPH--hemoprotein reductase] + O2 = (22R,7alpha)-dihydroxycholesterol + oxidized [NADPH--hemoprotein reductase] + H2O + H(+). It catalyses the reaction androst-5-en-3beta,17beta-diol + reduced [NADPH--hemoprotein reductase] + O2 = androst-5-en-3beta,7alpha,17beta-triol + oxidized [NADPH--hemoprotein reductase] + H2O + H(+). It carries out the reaction 5alpha-androstane-3beta,17beta-diol + reduced [NADPH--hemoprotein reductase] + O2 = 5alpha-androstane-3beta,6alpha,17beta-triol + oxidized [NADPH--hemoprotein reductase] + H2O + H(+). The catalysed reaction is 3beta-hydroxyandrost-5-en-17-one + reduced [NADPH--hemoprotein reductase] + O2 = 3beta,7alpha-dihydroxyandrost-5-en-17-one + oxidized [NADPH--hemoprotein reductase] + H2O + H(+). The enzyme catalyses 3beta-hydroxy-5alpha-androstan-17-one + reduced [NADPH--hemoprotein reductase] + O2 = 3beta,7alpha-dihydroxy-5alpha-androstan-17-one + oxidized [NADPH--hemoprotein reductase] + H2O + H(+). It catalyses the reaction pregnenolone + reduced [NADPH--hemoprotein reductase] + O2 = 7alpha-hydroxypregnenolone + oxidized [NADPH--hemoprotein reductase] + H2O + H(+). Its pathway is lipid metabolism; bile acid biosynthesis. The protein operates within steroid hormone biosynthesis. Its activity is regulated as follows. Inhibited by drugs voriconazole and metyrapone. In terms of biological role, a cytochrome P450 monooxygenase involved in the metabolism of endogenous oxysterols and steroid hormones, including neurosteroids. Mechanistically, uses molecular oxygen inserting one oxygen atom into a substrate, and reducing the second into a water molecule, with two electrons provided by NADPH via cytochrome P450 reductase (CPR; NADPH-ferrihemoprotein reductase). Catalyzes the hydroxylation of carbon hydrogen bonds of steroids with a preference for 7-alpha position. Usually metabolizes steroids carrying a hydroxy group at position 3, functioning as a 3-hydroxy steroid 7-alpha hydroxylase. Hydroxylates oxysterols, including 25-hydroxycholesterol and (25R)-cholest-5-ene-3beta,26-diol toward 7-alpha hydroxy derivatives, which may be transported to the liver and converted to bile acids. Via its product 7-alpha,25-dihydroxycholesterol, a ligand for the chemotactic G protein-coupled receptor GPR183/EBI2, regulates B cell migration in germinal centers of lymphoid organs, thus guiding efficient maturation of plasma B cells and overall antigen-specific humoral immune response. 7-alpha hydroxylates neurosteroids, including 3beta-hydroxyandrost-5-en-17-one (dehydroepiandrosterone) and pregnenolone, both involved in hippocampus-associated memory and learning. Metabolizes androstanoids toward 6- or 7-alpha hydroxy derivatives. This Mus musculus (Mouse) protein is Cytochrome P450 7B1.